We begin with the raw amino-acid sequence, 390 residues long: MDSEKKNKKKQIAILGSTGSIGTQALQVIEEHPDLYEAYALTANNRVELLIAQARKFQPEVVVIANEEKYAQLKEALSDLPIKVYAGIDAVCQIVEAGPVDMVLTAMVGYAGLKPTINAIRAKKAIALANKETLVVAGELINQLAQQYHTPILPVDSEHSAVFQCLAGEVGNPIEKVILTASGGPFRTCTLEQLKSVTKTQALKHPNWEMGAKITIDSASMMNKGFEVIEAKWLFGVQPSQIEVVVHPQSVIHSMVQFEDGAVKAQLGMPDMRLPIQYAFSYPDRICSSFDRLDFTQCTNLTFEQPDTKRFRNLALAYEAMYRGGNMPCIVNAANEVVVAAFLRDGISFLGMSDVIEKTMERAAFVAAPAYDDYVATDAEARRIAAELIP.

Thr18, Gly19, Ser20, Ile21, and Asn130 together coordinate NADPH. 1-deoxy-D-xylulose 5-phosphate is bound at residue Lys131. NADPH is bound at residue Glu132. Asp156 is a binding site for Mn(2+). 1-deoxy-D-xylulose 5-phosphate-binding residues include Ser157, Glu158, Ser182, and His205. Mn(2+) is bound at residue Glu158. Gly211 is an NADPH binding site. 1-deoxy-D-xylulose 5-phosphate contacts are provided by Ser218, Asn223, Lys224, and Glu227. Glu227 serves as a coordination point for Mn(2+).

The protein belongs to the DXR family. Mg(2+) serves as cofactor. Requires Mn(2+) as cofactor.

The catalysed reaction is 2-C-methyl-D-erythritol 4-phosphate + NADP(+) = 1-deoxy-D-xylulose 5-phosphate + NADPH + H(+). It participates in isoprenoid biosynthesis; isopentenyl diphosphate biosynthesis via DXP pathway; isopentenyl diphosphate from 1-deoxy-D-xylulose 5-phosphate: step 1/6. Its function is as follows. Catalyzes the NADPH-dependent rearrangement and reduction of 1-deoxy-D-xylulose-5-phosphate (DXP) to 2-C-methyl-D-erythritol 4-phosphate (MEP). In Bacteroides thetaiotaomicron (strain ATCC 29148 / DSM 2079 / JCM 5827 / CCUG 10774 / NCTC 10582 / VPI-5482 / E50), this protein is 1-deoxy-D-xylulose 5-phosphate reductoisomerase.